The primary structure comprises 155 residues: Mitochondrial fission 1 protein (155 aa).

Residues 1–131 (MTKVDFWPTL…DKIQKETLKG (131 aa)) are Cytoplasmic-facing. A helical membrane pass occupies residues 132–149 (VVVAGGVLAGAVAVASFF). Over 150–155 (LRNKRR) the chain is Mitochondrial intermembrane.

It belongs to the FIS1 family. As to quaternary structure, interacts with DNM1 and MDV1.

It localises to the mitochondrion outer membrane. Has a role in mitochondrial fission. Has a role in outer membrane fission but not matrix separation. Required for targeting MDV1 to the mitochondria. Regulates the assembly of DNM1 into punctate structures, in the mitochondrial tubules, promoting mitochondrial membrane constriction and/or division. The protein is Mitochondrial fission 1 protein (FIS1) of Saccharomyces cerevisiae (strain ATCC 204508 / S288c) (Baker's yeast).